The following is an 866-amino-acid chain: DNA mismatch repair protein MutS (866 aa).

Position 613–620 (613–620 (GPNMGGKS)) interacts with ATP.

This sequence belongs to the DNA mismatch repair MutS family.

Its function is as follows. This protein is involved in the repair of mismatches in DNA. It is possible that it carries out the mismatch recognition step. This protein has a weak ATPase activity. The polypeptide is DNA mismatch repair protein MutS (Haemophilus ducreyi (strain 35000HP / ATCC 700724)).